A 406-amino-acid chain; its full sequence is Acetylornithine/succinyldiaminopimelate aminotransferase (406 aa).

Residues 108-109 (GT) and phenylalanine 141 each bind pyridoxal 5'-phosphate. Position 144 (arginine 144) interacts with N(2)-acetyl-L-ornithine. 226–229 (DEVQ) is a binding site for pyridoxal 5'-phosphate. The residue at position 255 (lysine 255) is an N6-(pyridoxal phosphate)lysine. Serine 283 is a N(2)-acetyl-L-ornithine binding site. A pyridoxal 5'-phosphate-binding site is contributed by threonine 284.

This sequence belongs to the class-III pyridoxal-phosphate-dependent aminotransferase family. ArgD subfamily. In terms of assembly, homodimer. Pyridoxal 5'-phosphate is required as a cofactor.

It is found in the cytoplasm. It catalyses the reaction N(2)-acetyl-L-ornithine + 2-oxoglutarate = N-acetyl-L-glutamate 5-semialdehyde + L-glutamate. The catalysed reaction is N-succinyl-(2S,6S)-2,6-diaminopimelate + 2-oxoglutarate = (S)-2-succinylamino-6-oxoheptanedioate + L-glutamate. The protein operates within amino-acid biosynthesis; L-arginine biosynthesis; N(2)-acetyl-L-ornithine from L-glutamate: step 4/4. It participates in amino-acid biosynthesis; L-lysine biosynthesis via DAP pathway; LL-2,6-diaminopimelate from (S)-tetrahydrodipicolinate (succinylase route): step 2/3. Functionally, involved in both the arginine and lysine biosynthetic pathways. The sequence is that of Acetylornithine/succinyldiaminopimelate aminotransferase from Escherichia coli (strain K12).